The chain runs to 190 residues: Threonylcarbamoyl-AMP synthase (190 aa).

The 184-residue stretch at 7 to 190 (ADAISFIVDV…ALTGELFRQG (184 aa)) folds into the YrdC-like domain.

Belongs to the SUA5 family. TsaC subfamily.

Its subcellular location is the cytoplasm. It catalyses the reaction L-threonine + hydrogencarbonate + ATP = L-threonylcarbamoyladenylate + diphosphate + H2O. Required for the formation of a threonylcarbamoyl group on adenosine at position 37 (t(6)A37) in tRNAs that read codons beginning with adenine. Catalyzes the conversion of L-threonine, HCO(3)(-)/CO(2) and ATP to give threonylcarbamoyl-AMP (TC-AMP) as the acyladenylate intermediate, with the release of diphosphate. The sequence is that of Threonylcarbamoyl-AMP synthase from Cronobacter sakazakii (strain ATCC BAA-894) (Enterobacter sakazakii).